A 496-amino-acid polypeptide reads, in one-letter code: Adenosine transporter 1 (496 aa).

The Cytoplasmic segment spans residues 1-26; the sequence is MSSHTSTPNHASAAPPRKWYDMTSAE. The chain crosses the membrane as a helical span at residues 27–47; sequence FYVYVVAFMCGISMLMPINAV. Residues 48 to 77 lie on the Extracellular side of the membrane; it reads FSAPSYMLQYYLYATKDPNHVPQMTNFWSN. Residues 78–98 traverse the membrane as a helical segment; it reads VMTYYNLIGLVTGLVMEPLTL. Residues 99 to 107 lie on the Cytoplasmic side of the membrane; the sequence is LKSFRKIPM. A helical transmembrane segment spans residues 108–128; sequence LVRLLGGLCILIVEIIVLMAV. Topologically, residues 129–135 are extracellular; that stretch reads PARGTTE. The chain crosses the membrane as a helical span at residues 136 to 156; sequence GGAVATMCIAGFIGGLGKSIF. The Cytoplasmic segment spans residues 157–172; that stretch reads ESTVYGMFGAFPPSFT. Residues 173 to 193 form a helical membrane-spanning segment; it reads SIMMGGVGISGVLTSLIQIIV. Residues 194–208 lie on the Extracellular side of the membrane; the sequence is KAALPDTYEGVKKQS. Residues 209–229 traverse the membrane as a helical segment; the sequence is YIYYSLDVGIQAATFIALIMM. The Cytoplasmic portion of the chain corresponds to 230–336; it reads RFNSFAQLHF…SIISVLRSIK (107 aa). A helical membrane pass occupies residues 337 to 357; it reads WMFVSCAFVFVVTLFLFPGIA. At 358–365 the chain is on the extracellular side; that stretch reads TGMFPESK. A helical membrane pass occupies residues 366-386; that stretch reads WFATVAVFIFNCCDVLGRVAP. The Cytoplasmic portion of the chain corresponds to 387 to 399; it reads ALRFMWPRSYNQR. The chain crosses the membrane as a helical span at residues 400-420; sequence WIIVAASFARVIFVPLLLLYS. The Extracellular portion of the chain corresponds to 421 to 431; the sequence is YHYIPSEAYGY. The chain crosses the membrane as a helical span at residues 432-452; that stretch reads VIMVIFGFSSGYVASMSLTLG. Residues 453 to 464 are Cytoplasmic-facing; sequence PQSKGIDNDGKR. The chain crosses the membrane as a helical span at residues 465 to 485; that stretch reads FVAGTLMGISILVGGTIGTVL. Residues 486–496 are Extracellular-facing; that stretch reads SIMTQTIREKY.

Belongs to the SLC29A/ENT transporter (TC 2.A.57) family.

The protein localises to the membrane. It catalyses the reaction adenosine(in) = adenosine(out). In terms of biological role, adenosine transporter. In Crithidia fasciculata, this protein is Adenosine transporter 1.